The chain runs to 2301 residues: Genome polyprotein (2301 aa).

A zinc finger spans residues 3-14 (CKHGYPDVCPIC). The segment at 30 to 46 (DGEWFPTDLLCVDLDDD) is acidic. Positions 60-73 (MEWTDLPLVRDIVM) are theilo. Gly-77 is lipidated: N-myristoyl glycine; by host. Cysteines 501 and 503 form a disulfide. The segment at 1039–1045 (YYKQRLI) is host EIF4E binding. The SF3 helicase domain occupies 1281–1446 (IPLASLCEKF…CTTSNGMLDI (166 aa)). 1310–1317 (GAAGQGKS) lines the ATP pocket. The residue at position 1606 (Tyr-1606) is an O-(5'-phospho-RNA)-tyrosine. The Peptidase C3 domain occupies 1634–1827 (NPVMDFELFC…AATIITRELI (194 aa)). Catalysis depends on for protease 3C activity residues His-1678, Asp-1712, and Cys-1791. The RdRp catalytic domain occupies 2069-2187 (NYVYDVDYSN…GTNYQIDFNL (119 aa)). Residues Asp-2075 and Asp-2173 each act as for RdRp activity in the active site.

This sequence belongs to the picornaviruses polyprotein family. Interacts with host EIF4E. Interacts with the leader protein. As to quaternary structure, interacts with host RAN; the complex L-RAN recruits cellular kinases responsible for the L-induced nucleocytoplasmic trafficking inhibition. The complex L-RAN can further bind to the host exportins XPO1/CRM1 and CSE1L/CAS. Interacts with the protein 2A. Interacts with host RNASEL; this interaction prevents RNASEL activation by its substrate 2'-5' oligoadenylates. Phosphorylated. In terms of processing, specific enzymatic cleavages by the viral protease in vivo yield a variety of precursors and mature proteins. The polyprotein seems to be cotranslationally cleaved at the 2A/2B junction by a ribosomal skip from one codon to the next without formation of a peptide bond. This process would release the P1-2A peptide from the translational complex. Post-translationally, during virion maturation, immature virions are rendered infectious following cleavage of VP0 into VP4 and VP2. This maturation seems to be an autocatalytic event triggered by the presence of RNA in the capsid and is followed by a conformational change of the particle. Uridylylated by the polymerase and is covalently linked to the 5'-end of genomic RNA. This uridylylated form acts as a nucleotide-peptide primer for the polymerase. In terms of processing, myristoylation is required during RNA encapsidation and formation of the mature virus particle.

The protein localises to the virion. Its subcellular location is the host cytoplasm. The protein resides in the host nucleus. It is found in the host nucleolus. It localises to the host cytoplasmic vesicle membrane. It catalyses the reaction RNA(n) + a ribonucleoside 5'-triphosphate = RNA(n+1) + diphosphate. The enzyme catalyses ATP + H2O = ADP + phosphate + H(+). The catalysed reaction is Selective cleavage of Gln-|-Gly bond in the poliovirus polyprotein. In other picornavirus reactions Glu may be substituted for Gln, and Ser or Thr for Gly.. Functionally, forms a complex with host RAN and probably binds to exportins carrying activated MAPK in order to mediate the hyperphosphorylation of host Phe/Gly containing nuclear pore proteins (Nups) resulting in cessation of active nucleocytoplasmic transport. Proteins with NLS signals fail to import, cellular mRNAs fail to export, and some proteins small enough for diffusion are not retained anymore (efflux). The resulting inhibition of cellular protein synthesis serves to ensure maximal viral gene expression and to evade host immune response. The leader protein also inhibits host interferon regulatory factor 3 (IRF3) dimerization, thereby blocking the transcriptional activation of IFN genes. Binds to host RNase L thereby preventing its activation by 2'-5' oligoadenylates in order to counteract the antiviral interferon-inducible OAS/RNase L pathway. Forms an icosahedral capsid of pseudo T=3 symmetry with capsid proteins VP2 and VP3. Together they form an icosahedral capsid composed of 60 copies of each VP1, VP2, and VP3, with a diameter of approximately 300 Angstroms. VP4 lies on the inner surface of the protein shell formed by VP1, VP2 and VP3. All the three latter proteins contain a beta-sheet structure called beta-barrel jelly roll. VP1 is situated at the 12 fivefold axes, whereas VP2 and VP3 are located at the quasi-sixfold axes. Its function is as follows. Lies on the inner surface of the capsid shell. After binding to the host receptor, the capsid undergoes conformational changes. Capsid protein VP4 is released, capsid protein VP1 N-terminus is externalized, and together, they shape a pore in the host membrane through which the viral genome is translocated into the host cell cytoplasm. After genome has been released, the channel shrinks. In terms of biological role, VP0 precursor is a component of immature procapsids. Functionally, involved in host translation shutoff by inhibiting cap-dependent mRNA translation. Nuclear localization is required for this function. The resulting inhibition of cellular protein synthesis serves to ensure maximal viral gene expression and to evade host immune response. Inhibits the phosphorylation of the leader protein. Affects membrane integrity and causes an increase in membrane permeability. Its function is as follows. Associates with and induces structural rearrangements of intracellular membranes. It displays RNA-binding, nucleotide binding and NTPase activities. In terms of biological role, serves as membrane anchor via its hydrophobic domain. Functionally, forms a primer, VPg-pU, which is utilized by the polymerase for the initiation of RNA chains. Cysteine protease that generates mature viral proteins from the precursor polyprotein. In addition to its proteolytic activity, it binds to viral RNA, and thus influences viral genome replication. RNA and substrate cooperatively bind to the protease. Cleaves host PABP1, this cleavage is important for viral replication. Its function is as follows. Replicates the genomic and antigenomic RNAs by recognizing replications specific signals. Performs VPg uridylylation. The sequence is that of Genome polyprotein from Theiler's murine encephalomyelitis virus (strain DA) (TMEV).